The chain runs to 659 residues: Cysteine-rich receptor-like protein kinase 18 (659 aa).

The signal sequence occupies residues 1 to 27 (MATKSCELVLCFFVFFVISFSAISVSA). 2 consecutive Gnk2-homologous domains span residues 28-131 (QTCD…NRPF) and 137-250 (MDPL…VYPF). The Extracellular portion of the chain corresponds to 28-287 (QTCDNTTGTF…KNDSRISGGK (260 aa)). Residues asparagine 32, asparagine 57, asparagine 152, asparagine 162, asparagine 179, asparagine 180, asparagine 197, asparagine 275, and asparagine 279 are each glycosylated (N-linked (GlcNAc...) asparagine). Residues 288 to 308 (IAAIVVVTVVTIILVVLGFVI) form a helical membrane-spanning segment. Topologically, residues 309-659 (SNRRKQKQEM…EATITDVNPR (351 aa)) are cytoplasmic. Residues 339–611 (FSERNKLGKG…PTMSTIHQML (273 aa)) form the Protein kinase domain. ATP contacts are provided by residues 345–353 (LGKGGFGEV) and lysine 367. Position 412 is a phosphotyrosine (tyrosine 412). Aspartate 464 functions as the Proton acceptor in the catalytic mechanism. Serine 468 carries the phosphoserine modification. Residue threonine 504 is modified to Phosphothreonine. The residue at position 512 (tyrosine 512) is a Phosphotyrosine.

Belongs to the protein kinase superfamily. Ser/Thr protein kinase family. CRK subfamily.

The protein resides in the membrane. The catalysed reaction is L-seryl-[protein] + ATP = O-phospho-L-seryl-[protein] + ADP + H(+). The enzyme catalyses L-threonyl-[protein] + ATP = O-phospho-L-threonyl-[protein] + ADP + H(+). This chain is Cysteine-rich receptor-like protein kinase 18 (CRK18), found in Arabidopsis thaliana (Mouse-ear cress).